We begin with the raw amino-acid sequence, 491 residues long: 3-octaprenyl-4-hydroxybenzoate carboxy-lyase (491 aa).

Asn-172 contacts Mn(2+). Prenylated FMN-binding positions include 175–177 (IYR), 189–191 (RWL), and 194–195 (RG). Position 238 (Glu-238) interacts with Mn(2+). Asp-287 functions as the Proton donor in the catalytic mechanism.

Belongs to the UbiD family. As to quaternary structure, homohexamer. Prenylated FMN serves as cofactor. Requires Mn(2+) as cofactor.

The protein resides in the cell membrane. The enzyme catalyses a 4-hydroxy-3-(all-trans-polyprenyl)benzoate + H(+) = a 2-(all-trans-polyprenyl)phenol + CO2. The protein operates within cofactor biosynthesis; ubiquinone biosynthesis. Functionally, catalyzes the decarboxylation of 3-octaprenyl-4-hydroxy benzoate to 2-octaprenylphenol, an intermediate step in ubiquinone biosynthesis. In Klebsiella pneumoniae subsp. pneumoniae (strain ATCC 700721 / MGH 78578), this protein is 3-octaprenyl-4-hydroxybenzoate carboxy-lyase.